A 384-amino-acid chain; its full sequence is Secreted LysM effector Blys7 (384 aa).

An N-terminal signal peptide occupies residues 1–18; sequence MQRHLLLGLAGLPALLSA. The 45-residue stretch at 27–71 folds into the LysM 1 domain; it reads FATVAANGETCDSMAATWGLDTATFQSLNPKAKCPEVIGGEQYCV. The span at 81–106 shows a compositional bias: low complexity; the sequence is EPTTAPATTSTQTTTTTTTEVTSTTV. The interval 81-112 is disordered; that stretch reads EPTTAPATTSTQTTTTTTTEVTSTTVPGNGIT. The region spanning 127 to 173 is the LysM 2 domain; that stretch reads KFYFVNKGDNCADITARYNLDLSDFLEWNPKAGNSCSGLWANAYACV. Positions 183–206 are disordered; the sequence is KPKPTSTSTKPPTATGNGIPTPLP. The segment covering 186–195 has biased composition (low complexity); that stretch reads PTSTSTKPPT. The LysM 3 domain maps to 217–263; sequence KFYLVKPGETCADIASRNGVSLSDFLQWNPHAGNACSGLWANAYACL.

It belongs to the secreted LysM effector family.

In terms of biological role, might have a role in sequestration of chitin oligosaccharides (breakdown products of fungal cell walls that are released during invasion and act as triggers of host immunity) to dampen host defense. This chain is Secreted LysM effector Blys7, found in Beauveria bassiana (strain ARSEF 2860) (White muscardine disease fungus).